The chain runs to 333 residues: MKWKKLSLETTTEAVDLVCDMLLSLGIEGIEVVDKVPITEEEKKRMFIDILPELGEDDGIATINFYLENEEDLPSLKVSIQEGLDELRDFVEVGSGKLSLSETEDKDWINNWKEFFKPFRVDDTIVIKPTWEKLEERKETDLVIEIDPGTAFGTGAHETTKLCILNIKKYMQPGATLLDVGCGSGILTIIGRKLGAKTAVAIDIDENAVSASKENCDVNQLEAVLCQSSDSSTRTEGRIELFDGNVIEDRGLRERIGLNSYDFVVANILADIIIPLSAVVGEFMKPGAYFISSGIIDMKAEEVKEAILRNGFIIEEITTMGDWTSIVAKKPNK.

The S-adenosyl-L-methionine site is built by Thr160, Gly181, Asp203, and Asn267.

This sequence belongs to the methyltransferase superfamily. PrmA family.

It localises to the cytoplasm. The catalysed reaction is L-lysyl-[protein] + 3 S-adenosyl-L-methionine = N(6),N(6),N(6)-trimethyl-L-lysyl-[protein] + 3 S-adenosyl-L-homocysteine + 3 H(+). Methylates ribosomal protein L11. The polypeptide is Ribosomal protein L11 methyltransferase (Lachnoclostridium phytofermentans (strain ATCC 700394 / DSM 18823 / ISDg) (Clostridium phytofermentans)).